Here is an 87-residue protein sequence, read N- to C-terminus: Sec-independent protein translocase protein TatA (87 aa).

Residues 1–21 (MGSFSITHWLILLVVVVVVFG) traverse the membrane as a helical segment. The disordered stretch occupies residues 56–87 (VLDHDAGTNPPNITGTQSDTTSANKVDDTHNV). Positions 64-79 (NPPNITGTQSDTTSAN) are enriched in polar residues.

Belongs to the TatA/E family. As to quaternary structure, the Tat system comprises two distinct complexes: a TatABC complex, containing multiple copies of TatA, TatB and TatC subunits, and a separate TatA complex, containing only TatA subunits. Substrates initially bind to the TatABC complex, which probably triggers association of the separate TatA complex to form the active translocon.

The protein resides in the cell inner membrane. Part of the twin-arginine translocation (Tat) system that transports large folded proteins containing a characteristic twin-arginine motif in their signal peptide across membranes. TatA could form the protein-conducting channel of the Tat system. This chain is Sec-independent protein translocase protein TatA, found in Psychrobacter arcticus (strain DSM 17307 / VKM B-2377 / 273-4).